The chain runs to 167 residues: Beta-3 adrenergic receptor (167 aa).

Topologically, residues 1–25 are extracellular; it reads RVGADAEAQECHSNPRCCSFASNMP. C11 and C17 are oxidised to a cystine. A helical transmembrane segment spans residues 26-47; that stretch reads YALLSSSVSFYLPLLVMLFVYA. Residues 48 to 114 lie on the Cytoplasmic side of the membrane; sequence RVFVVAKRQR…LPLREHRALR (67 aa). The segment at 66–97 is disordered; the sequence is RFPPEESPRSPSRSPSPVAGGTGEAPDGVPSC. Residues 115 to 136 traverse the membrane as a helical segment; it reads TLGLIMGIFSLCWLPFFLANVL. Over 137–148 the chain is Extracellular; sequence RALAGPSIVPNG. The helical transmembrane segment at 149-167 threads the bilayer; sequence VFIALNWLGYANSAFNPLI.

This sequence belongs to the G-protein coupled receptor 1 family. Adrenergic receptor subfamily. ADRB3 sub-subfamily. Interacts with ARRDC3.

It localises to the cell membrane. Beta-adrenergic receptors mediate the catecholamine-induced activation of adenylate cyclase through the action of G proteins. Beta-3 is involved in the regulation of lipolysis and thermogenesis. The polypeptide is Beta-3 adrenergic receptor (ADRB3) (Meriones unguiculatus (Mongolian jird)).